A 271-amino-acid chain; its full sequence is Calretinin (271 aa).

EF-hand domains are found at residues 16-51, 63-98, 107-142, 151-186, 195-230, and 235-270; these read LTASQFLEIWKHFDADGNGYIEGKELENFFQELEKA, NFGEKMKEFMQKYDKNSDGKIEMAELAQILPTEENF, GSSAEFMEAWRKYDTDRSGYIEANELKGFLSDLLKK, KLQEYTQTILRMFDLNGDGKLGLSEMSRLLPVQENF, LTSEEFNAIFTFYDKDGSGYIDENELDALLKDLYEK, and MNIQQLTTYRKSVMSLAEAGKLYRKDLEIVLCSEPP. Residues aspartate 29, aspartate 31, asparagine 33, tyrosine 35, glutamate 40, aspartate 76, asparagine 78, aspartate 80, lysine 82, glutamate 87, aspartate 120, aspartate 122, serine 124, tyrosine 126, glutamate 131, aspartate 164, asparagine 166, aspartate 168, lysine 170, glutamate 175, aspartate 208, aspartate 210, serine 212, tyrosine 214, and glutamate 219 each coordinate Ca(2+). Residue tyrosine 214 is modified to Phosphotyrosine.

Belongs to the calbindin family. Widely expressed in central nervous system. Expressed in type I unipolar brush cells of the cerebellum (at protein level).

It is found in the synapse. It localises to the cell projection. The protein resides in the dendrite. In terms of biological role, calcium-binding protein involved in calcium homeostasis and signal transduction. It plays a critical role in buffering intracellular calcium levels and modulating calcium-dependent signaling pathways. Predominantly expressed in specific neuronal populations, influences synaptic plasticity and neuronal excitability, contributing to learning and memory. During embryonic development, it facilitates neuronal differentiation and maturation. The polypeptide is Calretinin (Calb2) (Mus musculus (Mouse)).